A 158-amino-acid polypeptide reads, in one-letter code: MTTFTHINHQGEANMVDVSAKQDTVREARAEAFVRMLPTTLNMILSGQHHKGDVFATARIAGIQAAKRTWELIPLCHPLLLSKVEVNLTALPEISSVRVESICKLSGKTGVEMEALTAASIAALTIYDMCKAVQKDIVIEQVRLLEKSGGKSGHFIAE.

Substrate is bound by residues 75–77 (LCH) and 113–114 (ME). D128 is an active-site residue.

It belongs to the MoaC family. Homohexamer; trimer of dimers.

It catalyses the reaction (8S)-3',8-cyclo-7,8-dihydroguanosine 5'-triphosphate = cyclic pyranopterin phosphate + diphosphate. It functions in the pathway cofactor biosynthesis; molybdopterin biosynthesis. In terms of biological role, catalyzes the conversion of (8S)-3',8-cyclo-7,8-dihydroguanosine 5'-triphosphate to cyclic pyranopterin monophosphate (cPMP). In Histophilus somni (strain 2336) (Haemophilus somnus), this protein is Cyclic pyranopterin monophosphate synthase.